We begin with the raw amino-acid sequence, 400 residues long: Phosphoglycerate kinase (400 aa).

Substrate-binding positions include 24-26 (DFN), arginine 39, 62-65 (HLGK), arginine 123, and arginine 156. ATP contacts are provided by residues lysine 207, glycine 298, glutamate 329, and 356 to 359 (GGDS).

It belongs to the phosphoglycerate kinase family. In terms of assembly, monomer.

The protein localises to the cytoplasm. The enzyme catalyses (2R)-3-phosphoglycerate + ATP = (2R)-3-phospho-glyceroyl phosphate + ADP. Its pathway is carbohydrate degradation; glycolysis; pyruvate from D-glyceraldehyde 3-phosphate: step 2/5. In Clostridioides difficile (strain 630) (Peptoclostridium difficile), this protein is Phosphoglycerate kinase.